The sequence spans 131 residues: Transcription antitermination protein NusB (131 aa).

It belongs to the NusB family.

Functionally, involved in transcription antitermination. Required for transcription of ribosomal RNA (rRNA) genes. Binds specifically to the boxA antiterminator sequence of the ribosomal RNA (rrn) operons. In Campylobacter curvus (strain 525.92), this protein is Transcription antitermination protein NusB.